A 238-amino-acid chain; its full sequence is 2-C-methyl-D-erythritol 4-phosphate cytidylyltransferase (238 aa).

Belongs to the IspD/TarI cytidylyltransferase family. IspD subfamily.

It carries out the reaction 2-C-methyl-D-erythritol 4-phosphate + CTP + H(+) = 4-CDP-2-C-methyl-D-erythritol + diphosphate. The protein operates within isoprenoid biosynthesis; isopentenyl diphosphate biosynthesis via DXP pathway; isopentenyl diphosphate from 1-deoxy-D-xylulose 5-phosphate: step 2/6. Its function is as follows. Catalyzes the formation of 4-diphosphocytidyl-2-C-methyl-D-erythritol from CTP and 2-C-methyl-D-erythritol 4-phosphate (MEP). The protein is 2-C-methyl-D-erythritol 4-phosphate cytidylyltransferase of Aliivibrio fischeri (strain ATCC 700601 / ES114) (Vibrio fischeri).